Reading from the N-terminus, the 144-residue chain is Nucleoside diphosphate kinase (144 aa).

Positions 11, 59, 87, 93, 104, and 114 each coordinate ATP. Histidine 117 (pros-phosphohistidine intermediate) is an active-site residue.

This sequence belongs to the NDK family. Homotetramer. Mg(2+) is required as a cofactor.

The protein resides in the cytoplasm. It carries out the reaction a 2'-deoxyribonucleoside 5'-diphosphate + ATP = a 2'-deoxyribonucleoside 5'-triphosphate + ADP. The enzyme catalyses a ribonucleoside 5'-diphosphate + ATP = a ribonucleoside 5'-triphosphate + ADP. In terms of biological role, major role in the synthesis of nucleoside triphosphates other than ATP. The ATP gamma phosphate is transferred to the NDP beta phosphate via a ping-pong mechanism, using a phosphorylated active-site intermediate. This is Nucleoside diphosphate kinase from Aliivibrio salmonicida (strain LFI1238) (Vibrio salmonicida (strain LFI1238)).